Reading from the N-terminus, the 139-residue chain is Putative pre-16S rRNA nuclease (139 aa).

The protein belongs to the YqgF nuclease family.

It is found in the cytoplasm. Could be a nuclease involved in processing of the 5'-end of pre-16S rRNA. The protein is Putative pre-16S rRNA nuclease of Photorhabdus laumondii subsp. laumondii (strain DSM 15139 / CIP 105565 / TT01) (Photorhabdus luminescens subsp. laumondii).